A 468-amino-acid polypeptide reads, in one-letter code: Putative ankyrin repeat protein R580 (468 aa).

ANK repeat units follow at residues 12–41 (DYFDPINLSIKDGGEKTIDIIDCERYTLID), 189–218 (VINKSLNFASKSNMSELAIFLVDNGAEINC), 249–278 (CHFDLVEAVFNSGSLEMIETFIDFGMKINS), 336–365 (SFDNALVSTINAGKFKNAEYLLFSGANINF), 367–393 (NMPTNCMFKINFQTIKFLIDNNFDLEI), and 394–423 (HGTLILNKSLLNGYYDCANILIENGVKFSL).

The chain is Putative ankyrin repeat protein R580 from Acanthamoeba polyphaga (Amoeba).